A 45-amino-acid chain; its full sequence is Putative UPF0377 protein YJL222W-B (45 aa).

It belongs to the UPF0377 family.

The chain is Putative UPF0377 protein YJL222W-B from Saccharomyces cerevisiae (strain ATCC 204508 / S288c) (Baker's yeast).